The primary structure comprises 59 residues: Small ribosomal subunit protein bS21 (59 aa).

The disordered stretch occupies residues 40 to 59 (KPSIKKRAKSKAALKYKKQR).

This sequence belongs to the bacterial ribosomal protein bS21 family.

In Protochlamydia amoebophila (strain UWE25), this protein is Small ribosomal subunit protein bS21.